A 349-amino-acid chain; its full sequence is S-adenosylmethionine:tRNA ribosyltransferase-isomerase (349 aa).

Belongs to the QueA family. As to quaternary structure, monomer.

The protein localises to the cytoplasm. The catalysed reaction is 7-aminomethyl-7-carbaguanosine(34) in tRNA + S-adenosyl-L-methionine = epoxyqueuosine(34) in tRNA + adenine + L-methionine + 2 H(+). The protein operates within tRNA modification; tRNA-queuosine biosynthesis. In terms of biological role, transfers and isomerizes the ribose moiety from AdoMet to the 7-aminomethyl group of 7-deazaguanine (preQ1-tRNA) to give epoxyqueuosine (oQ-tRNA). This Pseudomonas putida (strain GB-1) protein is S-adenosylmethionine:tRNA ribosyltransferase-isomerase.